A 147-amino-acid polypeptide reads, in one-letter code: Large ribosomal subunit protein uL13 (147 aa).

Belongs to the universal ribosomal protein uL13 family. As to quaternary structure, part of the 50S ribosomal subunit.

Functionally, this protein is one of the early assembly proteins of the 50S ribosomal subunit, although it is not seen to bind rRNA by itself. It is important during the early stages of 50S assembly. This Mycolicibacterium gilvum (strain PYR-GCK) (Mycobacterium gilvum (strain PYR-GCK)) protein is Large ribosomal subunit protein uL13.